A 99-amino-acid chain; its full sequence is Nucleoid-associated protein SSA_0326 (99 aa).

A compositionally biased stretch (low complexity) spans 1–15 (MMNMQSMMKQAQKLQ). Residues 1-23 (MMNMQSMMKQAQKLQKQMEKGQA) are disordered.

This sequence belongs to the YbaB/EbfC family. As to quaternary structure, homodimer.

The protein resides in the cytoplasm. Its subcellular location is the nucleoid. Binds to DNA and alters its conformation. May be involved in regulation of gene expression, nucleoid organization and DNA protection. In Streptococcus sanguinis (strain SK36), this protein is Nucleoid-associated protein SSA_0326.